Here is a 121-residue protein sequence, read N- to C-terminus: Large ribosomal subunit protein bL20 (121 aa).

It belongs to the bacterial ribosomal protein bL20 family.

In terms of biological role, binds directly to 23S ribosomal RNA and is necessary for the in vitro assembly process of the 50S ribosomal subunit. It is not involved in the protein synthesizing functions of that subunit. The protein is Large ribosomal subunit protein bL20 of Chlamydia caviae (strain ATCC VR-813 / DSM 19441 / 03DC25 / GPIC) (Chlamydophila caviae).